Here is a 218-residue protein sequence, read N- to C-terminus: Small ribosomal subunit protein uS3 (218 aa).

The 69-residue stretch at 38–106 (IREYISKRLS…RVHINILEIK (69 aa)) folds into the KH type-2 domain.

It belongs to the universal ribosomal protein uS3 family. Part of the 30S ribosomal subunit. Forms a tight complex with proteins S10 and S14.

In terms of biological role, binds the lower part of the 30S subunit head. Binds mRNA in the 70S ribosome, positioning it for translation. In Bacillus subtilis (strain 168), this protein is Small ribosomal subunit protein uS3.